The sequence spans 520 residues: Protein EARLY FLOWERING 5 (520 aa).

Short sequence motifs (nuclear localization signal) lie at residues 16–23 (YRKQIRKR), 52–59 (IRKLDMSK), and 71–78 (KKRQLEDT). A disordered region spans residues 83–410 (VKKRKEYDEK…PPSSFQDGQA (328 aa)). 2 stretches are compositionally biased toward basic and acidic residues: residues 87 to 97 (KEYDEKKKEQG) and 114 to 126 (LTGE…EDSV). Positions 148–168 (SSIGLAISSDGASSSSAALSS) are enriched in low complexity. 3 stretches are compositionally biased toward pro residues: residues 198-207 (PLPPLPPLPP), 216-227 (SPFPPPPPGPPP), and 235-253 (PPLP…PPPG). Composition is skewed to polar residues over residues 267-281 (SDFT…NITS), 300-312 (AESN…NANL), and 326-343 (QQHQ…TNFQ). Composition is skewed to pro residues over residues 346–369 (VHPP…PPHP) and 378–403 (PRPP…PPPS).

As to expression, in seedlings, mostly expressed in the shoot apical meristem (SAM) and root tip.

The protein resides in the nucleus. Involved in the regulation of flowering time in both long and short days. The polypeptide is Protein EARLY FLOWERING 5 (Arabidopsis thaliana (Mouse-ear cress)).